Reading from the N-terminus, the 254-residue chain is Ribonuclease HII (254 aa).

Positions 67–254 (IVIAGVDEVG…HRMSFLKNII (188 aa)) constitute an RNase H type-2 domain. A divalent metal cation contacts are provided by Asp73, Glu74, and Asp170.

The protein belongs to the RNase HII family. The cofactor is Mn(2+). Requires Mg(2+) as cofactor.

The protein localises to the cytoplasm. The enzyme catalyses Endonucleolytic cleavage to 5'-phosphomonoester.. Endonuclease that specifically degrades the RNA of RNA-DNA hybrids. The sequence is that of Ribonuclease HII from Clostridium acetobutylicum (strain ATCC 824 / DSM 792 / JCM 1419 / IAM 19013 / LMG 5710 / NBRC 13948 / NRRL B-527 / VKM B-1787 / 2291 / W).